Reading from the N-terminus, the 212-residue chain is Adenylate kinase (212 aa).

ATP is bound at residue 10–15; the sequence is GAGKGT. The interval 30–59 is NMP; the sequence is AIGDIFRTIIKTSTSEAELINNYVRQGELI. AMP contacts are provided by residues arginine 36, 57-59, 85-88, and glutamine 92; these read ELI and GYPR. An LID region spans residues 122–160; the sequence is GRYSCKNCGKIYNRYFLQPKTDNVCDVCGSSTFDYRKDD. Arginine 123 is a binding site for ATP. Positions 126 and 129 each coordinate Zn(2+). Residue 132-133 participates in ATP binding; sequence IY. Positions 146 and 149 each coordinate Zn(2+). AMP is bound by residues arginine 157 and arginine 168. Lysine 196 serves as a coordination point for ATP.

The protein belongs to the adenylate kinase family. Monomer.

It is found in the cytoplasm. It catalyses the reaction AMP + ATP = 2 ADP. It participates in purine metabolism; AMP biosynthesis via salvage pathway; AMP from ADP: step 1/1. In terms of biological role, catalyzes the reversible transfer of the terminal phosphate group between ATP and AMP. Plays an important role in cellular energy homeostasis and in adenine nucleotide metabolism. The sequence is that of Adenylate kinase from Rickettsia peacockii (strain Rustic).